Here is a 133-residue protein sequence, read N- to C-terminus: Fluoride-specific ion channel FluC (133 aa).

The next 4 membrane-spanning stretches (helical) occupy residues 3-23, 41-61, 76-96, and 103-123; these read AVVWWQSLLLVMLGGAFGSGL, WGTLAVNLIGSFVAGFLLIWV, IVGLIGGLTTFSSLMVECLVF, and LIVGFYLCITLLFGLLFVFLG. Na(+)-binding residues include glycine 81 and threonine 84.

The protein belongs to the fluoride channel Fluc/FEX (TC 1.A.43) family.

The protein resides in the cell inner membrane. The enzyme catalyses fluoride(in) = fluoride(out). With respect to regulation, na(+) is not transported, but it plays an essential structural role and its presence is essential for fluoride channel function. In terms of biological role, fluoride-specific ion channel. Important for reducing fluoride concentration in the cell, thus reducing its toxicity. The chain is Fluoride-specific ion channel FluC from Xylella fastidiosa (strain M23).